A 219-amino-acid chain; its full sequence is Glutathione S-transferase (219 aa).

Residues 2-89 (SQPILGYWDI…YLGRKYKLNG (88 aa)) form the GST N-terminal domain. Residues 8 to 9 (YW), 44 to 47 (RSEW), lysine 51, 60 to 61 (NL), and 73 to 74 (QT) each bind glutathione. A GST C-terminal domain is found at 91–207 (NDHEEIRISM…YIKKQQPKTF (117 aa)). Tyrosine 117 contributes to the substrate binding site.

It belongs to the GST superfamily. Mu family. Homodimer.

It is found in the cytoplasm. It catalyses the reaction RX + glutathione = an S-substituted glutathione + a halide anion + H(+). This Dermatophagoides pteronyssinus (European house dust mite) protein is Glutathione S-transferase.